The following is a 268-amino-acid chain: Tryptophan synthase alpha chain (268 aa).

Active-site proton acceptor residues include Glu-49 and Asp-60.

Belongs to the TrpA family. In terms of assembly, tetramer of two alpha and two beta chains.

The enzyme catalyses (1S,2R)-1-C-(indol-3-yl)glycerol 3-phosphate + L-serine = D-glyceraldehyde 3-phosphate + L-tryptophan + H2O. The protein operates within amino-acid biosynthesis; L-tryptophan biosynthesis; L-tryptophan from chorismate: step 5/5. In terms of biological role, the alpha subunit is responsible for the aldol cleavage of indoleglycerol phosphate to indole and glyceraldehyde 3-phosphate. This Escherichia coli O1:K1 / APEC protein is Tryptophan synthase alpha chain.